A 336-amino-acid chain; its full sequence is Phosphate acyltransferase (336 aa).

The protein belongs to the PlsX family. In terms of assembly, homodimer. Probably interacts with PlsY.

Its subcellular location is the cytoplasm. It carries out the reaction a fatty acyl-[ACP] + phosphate = an acyl phosphate + holo-[ACP]. It participates in lipid metabolism; phospholipid metabolism. Its function is as follows. Catalyzes the reversible formation of acyl-phosphate (acyl-PO(4)) from acyl-[acyl-carrier-protein] (acyl-ACP). This enzyme utilizes acyl-ACP as fatty acyl donor, but not acyl-CoA. The chain is Phosphate acyltransferase from Pseudomonas paraeruginosa (strain DSM 24068 / PA7) (Pseudomonas aeruginosa (strain PA7)).